A 253-amino-acid chain; its full sequence is MVALKYVLVPVALVAAKNIVEMITFRDENGKLHRRLAPEEYRGGVLDGEESRLLQKRDLEMHPPVDLGVYFSNRPIHRTIDVPDIYLDSQISVLTELDIFASYSRNDEKSYDMFRDPESDLIVIAPTNAAITALAKKPWQFPMDIDTMEQAGSSERDIDNAIHNNIVNFVRSHVVAYQKDTKTSKDGTVLLQSKQYSMQHSNGKGGDVLLKREGEKYCVASVVDEVFHDVQNIYSTKNGVILVIDATLSRPGA.

An N-terminal signal peptide occupies residues 1 to 16; it reads MVALKYVLVPVALVAA. The 165-residue stretch at 84-248 folds into the FAS1 domain; sequence DIYLDSQISV…GVILVIDATL (165 aa).

The protein resides in the vacuole. The sequence is that of FAS1 domain-containing protein CAGL0M08734g from Candida glabrata (strain ATCC 2001 / BCRC 20586 / JCM 3761 / NBRC 0622 / NRRL Y-65 / CBS 138) (Yeast).